The sequence spans 188 residues: Dual specificity protein phosphatase 18 (188 aa).

The Tyrosine-protein phosphatase domain occupies 19–160; that stretch reads GLSQITSSLY…LIHYEFQLFG (142 aa). Residues 95–141 form a sufficient for mitochondrial localization region; sequence MKQGRTLLHCAAGVSRSAALCLAYLMKYHAMSLLDAHTWTKSCRPII. The Phosphocysteine intermediate role is filled by Cys-104.

The protein belongs to the protein-tyrosine phosphatase family. Non-receptor class dual specificity subfamily.

It localises to the cytoplasm. It is found in the nucleus. The protein resides in the mitochondrion inner membrane. It catalyses the reaction O-phospho-L-tyrosyl-[protein] + H2O = L-tyrosyl-[protein] + phosphate. The enzyme catalyses O-phospho-L-seryl-[protein] + H2O = L-seryl-[protein] + phosphate. It carries out the reaction O-phospho-L-threonyl-[protein] + H2O = L-threonyl-[protein] + phosphate. Functionally, can dephosphorylate single and diphosphorylated synthetic MAPK peptides, with preference for the phosphotyrosine and diphosphorylated forms over phosphothreonine. In vitro, dephosphorylates p-nitrophenyl phosphate (pNPP). In Bos taurus (Bovine), this protein is Dual specificity protein phosphatase 18 (DUSP18).